Here is a 268-residue protein sequence, read N- to C-terminus: Hemin import ATP-binding protein HmuV (268 aa).

One can recognise an ABC transporter domain in the interval 5–241; that stretch reads LKAEAASFAL…ELIADVFDVA (237 aa). 37-44 is a binding site for ATP; it reads GPNGAGKS.

This sequence belongs to the ABC transporter superfamily. Heme (hemin) importer (TC 3.A.1.14.5) family. In terms of assembly, the complex is composed of two ATP-binding proteins (HmuV), two transmembrane proteins (HmuU) and a solute-binding protein (HmuT).

Its subcellular location is the cell inner membrane. Its function is as follows. Part of the ABC transporter complex HmuTUV involved in hemin import. Responsible for energy coupling to the transport system. This chain is Hemin import ATP-binding protein HmuV, found in Rhodopseudomonas palustris (strain ATCC BAA-98 / CGA009).